A 154-amino-acid chain; its full sequence is Transcriptional repressor NrdR (154 aa).

A zinc finger lies at 3-34 (CPFCNAPDTKVIDSRLATEGAQVRRRRECMSC). An ATP-cone domain is found at 49 to 139 (PRVIKSDGNR…VYRSFQDVNA (91 aa)).

The protein belongs to the NrdR family. The cofactor is Zn(2+).

In terms of biological role, negatively regulates transcription of bacterial ribonucleotide reductase nrd genes and operons by binding to NrdR-boxes. The polypeptide is Transcriptional repressor NrdR (Hydrogenovibrio crunogenus (strain DSM 25203 / XCL-2) (Thiomicrospira crunogena)).